We begin with the raw amino-acid sequence, 258 residues long: Tryptophan synthase alpha chain (258 aa).

Active-site proton acceptor residues include E47 and D58.

Belongs to the TrpA family. As to quaternary structure, tetramer of two alpha and two beta chains.

The enzyme catalyses (1S,2R)-1-C-(indol-3-yl)glycerol 3-phosphate + L-serine = D-glyceraldehyde 3-phosphate + L-tryptophan + H2O. The protein operates within amino-acid biosynthesis; L-tryptophan biosynthesis; L-tryptophan from chorismate: step 5/5. The alpha subunit is responsible for the aldol cleavage of indoleglycerol phosphate to indole and glyceraldehyde 3-phosphate. In Bacillus cereus (strain ATCC 14579 / DSM 31 / CCUG 7414 / JCM 2152 / NBRC 15305 / NCIMB 9373 / NCTC 2599 / NRRL B-3711), this protein is Tryptophan synthase alpha chain.